We begin with the raw amino-acid sequence, 601 residues long: Arginine--tRNA ligase (601 aa).

Residues 133-143 (PNTNKPLHLGH) carry the 'HIGH' region motif.

Belongs to the class-I aminoacyl-tRNA synthetase family. Monomer.

Its subcellular location is the cytoplasm. The catalysed reaction is tRNA(Arg) + L-arginine + ATP = L-arginyl-tRNA(Arg) + AMP + diphosphate. In Flavobacterium psychrophilum (strain ATCC 49511 / DSM 21280 / CIP 103535 / JIP02/86), this protein is Arginine--tRNA ligase.